Here is a 451-residue protein sequence, read N- to C-terminus: UPF0210 protein CA_C0479 (451 aa).

Belongs to the UPF0210 family. Homodimer.

In Clostridium acetobutylicum (strain ATCC 824 / DSM 792 / JCM 1419 / IAM 19013 / LMG 5710 / NBRC 13948 / NRRL B-527 / VKM B-1787 / 2291 / W), this protein is UPF0210 protein CA_C0479.